A 140-amino-acid polypeptide reads, in one-letter code: Large-conductance mechanosensitive channel (140 aa).

Transmembrane regions (helical) follow at residues 21 to 41 (VGVIIGGAFGKIVESLVGDVI) and 82 to 102 (GSFITVAINFMILAFIIFMMI).

This sequence belongs to the MscL family. In terms of assembly, homopentamer.

The protein resides in the cell inner membrane. In terms of biological role, channel that opens in response to stretch forces in the membrane lipid bilayer. May participate in the regulation of osmotic pressure changes within the cell. This chain is Large-conductance mechanosensitive channel, found in Leptothrix cholodnii (strain ATCC 51168 / LMG 8142 / SP-6) (Leptothrix discophora (strain SP-6)).